A 27-amino-acid chain; its full sequence is U1-poneritoxin-Na3a (27 aa).

The protein belongs to the ponericin-G family. In terms of tissue distribution, expressed by the venom gland.

It is found in the secreted. Has activity against some Gram-positive bacteria and S.cerevisiae. Has a non-hemolytic activity. The chain is U1-poneritoxin-Na3a from Neoponera apicalis (Ant).